The following is a 58-amino-acid chain: Small ribosomal subunit protein bS21 (58 aa).

The disordered stretch occupies residues 36-58; it reads EHYEKPSVKRKKKSEAARKRKFK. Positions 43–58 are enriched in basic residues; it reads VKRKKKSEAARKRKFK.

This sequence belongs to the bacterial ribosomal protein bS21 family.

This is Small ribosomal subunit protein bS21 from Clostridium kluyveri (strain NBRC 12016).